Reading from the N-terminus, the 380-residue chain is Cytochrome b (380 aa).

Helical transmembrane passes span 34-54 (FGSL…FLAM), 78-99 (WLLR…YFHI), 114-134 (WNIG…GYVL), and 179-199 (FFTF…IHLL). Residues His-84 and His-98 each contribute to the heme b site. His-197 is a binding site for heme b. His-202 contributes to the a ubiquinone binding site. Transmembrane regions (helical) follow at residues 227 to 247 (FKDL…STFA), 289 to 309 (LGGV…PITH), 321 to 341 (TAKA…WIGG), and 348 to 368 (FISI…LIIP).

It belongs to the cytochrome b family. As to quaternary structure, the cytochrome bc1 complex contains 3 respiratory subunits (MT-CYB, CYC1 and UQCRFS1), 2 core proteins (UQCRC1 and UQCRC2) and probably 6 low-molecular weight proteins. Heme b serves as cofactor.

The protein localises to the mitochondrion inner membrane. In terms of biological role, component of the ubiquinol-cytochrome c reductase complex (complex III or cytochrome b-c1 complex) that is part of the mitochondrial respiratory chain. The b-c1 complex mediates electron transfer from ubiquinol to cytochrome c. Contributes to the generation of a proton gradient across the mitochondrial membrane that is then used for ATP synthesis. This chain is Cytochrome b (mt-cyb), found in Glandirana rugosa (Japanese wrinkled frog).